Reading from the N-terminus, the 360-residue chain is CCA-adding enzyme (360 aa).

ATP is bound by residues glycine 8 and arginine 11. Glycine 8 and arginine 11 together coordinate CTP. Residues aspartate 21 and aspartate 23 each contribute to the Mg(2+) site. ATP-binding residues include arginine 91, arginine 137, and arginine 140. Arginine 91, arginine 137, and arginine 140 together coordinate CTP.

It belongs to the tRNA nucleotidyltransferase/poly(A) polymerase family. Bacterial CCA-adding enzyme type 2 subfamily. The cofactor is Mg(2+).

It catalyses the reaction a tRNA precursor + 2 CTP + ATP = a tRNA with a 3' CCA end + 3 diphosphate. The enzyme catalyses a tRNA with a 3' CCA end + 2 CTP + ATP = a tRNA with a 3' CCACCA end + 3 diphosphate. Functionally, catalyzes the addition and repair of the essential 3'-terminal CCA sequence in tRNAs without using a nucleic acid template. Adds these three nucleotides in the order of C, C, and A to the tRNA nucleotide-73, using CTP and ATP as substrates and producing inorganic pyrophosphate. tRNA 3'-terminal CCA addition is required both for tRNA processing and repair. Also involved in tRNA surveillance by mediating tandem CCA addition to generate a CCACCA at the 3' terminus of unstable tRNAs. While stable tRNAs receive only 3'-terminal CCA, unstable tRNAs are marked with CCACCA and rapidly degraded. This chain is CCA-adding enzyme, found in Francisella tularensis subsp. tularensis (strain FSC 198).